We begin with the raw amino-acid sequence, 291 residues long: MAFMKTHLLPILGLFMAYYYYSAYEEFRPEMLQGKKVIVTGASKGIGREMAYHLAKMGAHVVVTARSKETLQKVVSHCLELGAASAHYIAGTMEDMTFAEQFVAQAGKLMGGLDMLILNHITNTSLNFFHDDIHHVRKSMEVNFLSYVVLTVAAMPMLKQSNGSIVIVSSVAGKVAYPMISAYSASKFALYGFFSSIRKEYLMSEVNVSITLCVLGLIDTDTAMKAVSGIIKMQAARKEECALEIIKGGVLRQEEVYYDRSLWTTLLLRNPSRKILEFLRSTSYSTDGLIN.

Topologically, residues 1–7 (MAFMKTH) are cytoplasmic. Residues 8–24 (LLPILGLFMAYYYYSAY) traverse the membrane as a helical; Signal-anchor for type II membrane protein segment. The Lumenal segment spans residues 25–291 (EEFRPEMLQG…TSYSTDGLIN (267 aa)). Residues 41 to 67 (GASK…TARS), 92 to 93 (TM), and 119 to 121 (NHI) each bind NADP(+). Residues N123 and N162 are each glycosylated (N-linked (GlcNAc...) asparagine). S170 contributes to the substrate binding site. Y183 functions as the Proton acceptor in the catalytic mechanism. 183–187 (YSASK) lines the NADP(+) pocket. N-linked (GlcNAc...) asparagine glycosylation occurs at N207. Residue 218-222 (IDTDT) participates in NADP(+) binding.

It belongs to the short-chain dehydrogenases/reductases (SDR) family. As to quaternary structure, homodimer. As to expression, abundantly expressed in the liver, followed by fibroblasts, also detected in the brain, lung, heart, and ovary, and in smaller amounts in kidney, skin, and spleen.

It localises to the endoplasmic reticulum membrane. It catalyses the reaction an 11beta-hydroxysteroid + NADP(+) = an 11-oxosteroid + NADPH + H(+). The enzyme catalyses cortisone + NADPH + H(+) = cortisol + NADP(+). The catalysed reaction is corticosterone + NADP(+) = 11-dehydrocorticosterone + NADPH + H(+). It carries out the reaction a 7beta-hydroxysteroid + NADP(+) = a 7-oxosteroid + NADPH + H(+). It catalyses the reaction 7-oxocholesterol + NADPH + H(+) = 7beta-hydroxycholesterol + NADP(+). The enzyme catalyses chenodeoxycholate + NADP(+) = 7-oxolithocholate + NADPH + H(+). The catalysed reaction is 7-oxolithocholate + NADPH + H(+) = ursodeoxycholate + NADP(+). It carries out the reaction glycochenodeoxycholate + NADP(+) = 7-oxoglycolithocholate + NADPH + H(+). It catalyses the reaction taurochenodeoxycholate + NADP(+) = 7-oxotaurolithocholate + NADPH + H(+). The enzyme catalyses tauroursodeoxycholate + NADP(+) = 7-oxotaurolithocholate + NADPH + H(+). The catalysed reaction is glycoursodeoxycholate + NADP(+) = 7-oxoglycolithocholate + NADPH + H(+). It carries out the reaction 7-oxopregnenolone + NADPH + H(+) = 7beta-hydroxypregnenolone + NADP(+). It catalyses the reaction 3beta,7alpha-dihydroxyandrost-5-en-17-one + NADP(+) = 3beta-hydroxy-5-androstene-7,17-dione + NADPH + H(+). The enzyme catalyses 3beta-hydroxy-5-androstene-7,17-dione + NADPH + H(+) = 3beta,7beta-dihydroxyandrost-5-en-17-one + NADP(+). The catalysed reaction is 3beta-hydroxy-5alpha-androstane-7,17-dione + NADPH + H(+) = 3beta,7beta-dihydroxy-5alpha-androstan-17-one + NADP(+). It participates in steroid metabolism. In terms of biological role, controls the reversible conversion of biologically active glucocorticoids such as cortisone to cortisol, and 11-dehydrocorticosterone to corticosterone in the presence of NADP(H). Participates in the corticosteroid receptor-mediated anti-inflammatory response, as well as metabolic and homeostatic processes. Bidirectional in vitro, predominantly functions as a reductase in vivo, thereby increasing the concentration of active glucocorticoids. It has broad substrate specificity, besides glucocorticoids, it accepts other steroid and sterol substrates. Interconverts 7-oxo- and 7-hydroxy-neurosteroids such as 7-oxopregnenolone and 7beta-hydroxypregnenolone, 7-oxodehydroepiandrosterone (3beta-hydroxy-5-androstene-7,17-dione) and 7beta-hydroxydehydroepiandrosterone (3beta,7beta-dihydroxyandrost-5-en-17-one), among others. Catalyzes the stereo-specific conversion of the major dietary oxysterol, 7-ketocholesterol (7-oxocholesterol), into the more polar 7-beta-hydroxycholesterol metabolite. 7-oxocholesterol is one of the most important oxysterols, it participates in several events such as induction of apoptosis, accumulation in atherosclerotic lesions, lipid peroxidation, and induction of foam cell formation. Mediates the 7-oxo reduction of 7-oxolithocholate mainly to chenodeoxycholate, and to a lesser extent to ursodeoxycholate, both in its free form and when conjugated to glycine or taurine, providing a link between glucocorticoid activation and bile acid metabolism. Catalyzes the synthesis of 7-beta-25-dihydroxycholesterol from 7-oxo-25-hydroxycholesterol in vitro, which acts as a ligand for the G-protein-coupled receptor (GPCR) Epstein-Barr virus-induced gene 2 (EBI2) and may thereby regulate immune cell migration. The sequence is that of 11-beta-hydroxysteroid dehydrogenase 1 (HSD11B1) from Saimiri sciureus (Common squirrel monkey).